The chain runs to 276 residues: Glutamate 5-kinase (276 aa).

Lys-14 is an ATP binding site. Residues Ser-54, Asp-141, and Asn-157 each coordinate substrate. ATP is bound by residues 177 to 178 and 219 to 225; these read SD and TGGMLTK.

The protein belongs to the glutamate 5-kinase family.

Its subcellular location is the cytoplasm. It carries out the reaction L-glutamate + ATP = L-glutamyl 5-phosphate + ADP. It participates in amino-acid biosynthesis; L-proline biosynthesis; L-glutamate 5-semialdehyde from L-glutamate: step 1/2. Catalyzes the transfer of a phosphate group to glutamate to form L-glutamate 5-phosphate. The protein is Glutamate 5-kinase of Listeria welshimeri serovar 6b (strain ATCC 35897 / DSM 20650 / CCUG 15529 / CIP 8149 / NCTC 11857 / SLCC 5334 / V8).